The primary structure comprises 149 residues: Transcriptional repressor NrdR (149 aa).

A zinc finger spans residues 3 to 34 (CPFCSTEETKVIDSRLVSDGYQVRRRRECTKC). Positions 49–139 (PKIIKNNGMR…VYLSFENINE (91 aa)) constitute an ATP-cone domain.

This sequence belongs to the NrdR family. Zn(2+) is required as a cofactor.

Functionally, negatively regulates transcription of bacterial ribonucleotide reductase nrd genes and operons by binding to NrdR-boxes. The sequence is that of Transcriptional repressor NrdR from Mannheimia succiniciproducens (strain KCTC 0769BP / MBEL55E).